The primary structure comprises 198 residues: Recombination protein RecR (198 aa).

Residues 57-72 (CSVCGNITDEDPCEIC) form a C4-type zinc finger. Positions 80-175 (EMILVVEQPK…KVTRLAHGLA (96 aa)) constitute a Toprim domain.

This sequence belongs to the RecR family.

Functionally, may play a role in DNA repair. It seems to be involved in an RecBC-independent recombinational process of DNA repair. It may act with RecF and RecO. This chain is Recombination protein RecR, found in Latilactobacillus sakei subsp. sakei (strain 23K) (Lactobacillus sakei subsp. sakei).